The sequence spans 418 residues: Serine--tRNA ligase (418 aa).

231–233 (TAE) is a binding site for L-serine. 262-264 (RRE) lines the ATP pocket. Glu285 is a binding site for L-serine. Residue 349–352 (EISS) participates in ATP binding. Ser384 contacts L-serine.

It belongs to the class-II aminoacyl-tRNA synthetase family. Type-1 seryl-tRNA synthetase subfamily. As to quaternary structure, homodimer. The tRNA molecule binds across the dimer.

It is found in the cytoplasm. The catalysed reaction is tRNA(Ser) + L-serine + ATP = L-seryl-tRNA(Ser) + AMP + diphosphate + H(+). The enzyme catalyses tRNA(Sec) + L-serine + ATP = L-seryl-tRNA(Sec) + AMP + diphosphate + H(+). It functions in the pathway aminoacyl-tRNA biosynthesis; selenocysteinyl-tRNA(Sec) biosynthesis; L-seryl-tRNA(Sec) from L-serine and tRNA(Sec): step 1/1. Catalyzes the attachment of serine to tRNA(Ser). Is also able to aminoacylate tRNA(Sec) with serine, to form the misacylated tRNA L-seryl-tRNA(Sec), which will be further converted into selenocysteinyl-tRNA(Sec). The protein is Serine--tRNA ligase of Coprothermobacter proteolyticus (strain ATCC 35245 / DSM 5265 / OCM 4 / BT).